The primary structure comprises 253 residues: 5'/3'-nucleotidase SurE (253 aa).

The a divalent metal cation site is built by Asp8, Asp9, Ser39, and Asn92.

It belongs to the SurE nucleotidase family. The cofactor is a divalent metal cation.

It is found in the cytoplasm. It carries out the reaction a ribonucleoside 5'-phosphate + H2O = a ribonucleoside + phosphate. The catalysed reaction is a ribonucleoside 3'-phosphate + H2O = a ribonucleoside + phosphate. The enzyme catalyses [phosphate](n) + H2O = [phosphate](n-1) + phosphate + H(+). In terms of biological role, nucleotidase with a broad substrate specificity as it can dephosphorylate various ribo- and deoxyribonucleoside 5'-monophosphates and ribonucleoside 3'-monophosphates with highest affinity to 3'-AMP. Also hydrolyzes polyphosphate (exopolyphosphatase activity) with the preference for short-chain-length substrates (P20-25). Might be involved in the regulation of dNTP and NTP pools, and in the turnover of 3'-mononucleotides produced by numerous intracellular RNases (T1, T2, and F) during the degradation of various RNAs. This Escherichia coli O17:K52:H18 (strain UMN026 / ExPEC) protein is 5'/3'-nucleotidase SurE.